We begin with the raw amino-acid sequence, 714 residues long: Hormonally up-regulated neu tumor-associated kinase (714 aa).

Positions 1–16 (MPAAAGDGLLGEPAAP) are enriched in low complexity. Positions 1–28 (MPAAAGDGLLGEPAAPGGDGGAEDTTRP) are disordered. The Protein kinase domain occupies 62–320 (LIGSRKLGEG…IQQALANRWL (259 aa)). Residues 68 to 76 (LGEGSFAKV) and lysine 91 contribute to the ATP site. Aspartate 186 acts as the Proton acceptor in catalysis. Over residues 624 to 635 (HEEKNSPPKEEG) the composition is skewed to basic and acidic residues. Disordered stretches follow at residues 624 to 658 (HEEK…NCVK) and 674 to 714 (KRHQ…KGQC). Positions 692–703 (SPLQPTAPSSLS) are enriched in polar residues.

Belongs to the protein kinase superfamily. CAMK Ser/Thr protein kinase family. SNF1 subfamily.

The catalysed reaction is L-seryl-[protein] + ATP = O-phospho-L-seryl-[protein] + ADP + H(+). It catalyses the reaction L-threonyl-[protein] + ATP = O-phospho-L-threonyl-[protein] + ADP + H(+). This chain is Hormonally up-regulated neu tumor-associated kinase (Hunk), found in Mus musculus (Mouse).